The primary structure comprises 600 residues: Calcium/calmodulin-dependent serine/threonine-protein kinase 1 (600 aa).

The disordered stretch occupies residues 1 to 99; the sequence is MGLCHGKSAA…GGFKRPFPPP (99 aa). Residues 24–56 are compositionally biased toward low complexity; sequence TRVAEAAAAPAKPASPAPSAAAAAAAPAKPGTP. The segment covering 74 to 85 has biased composition (polar residues); that stretch reads YKGSPANSSVAS. A Protein kinase domain is found at 147-409; sequence YELGREVGRG…AAQALCHPWI (263 aa). Residues 153–161 and K179 each bind ATP; that span reads VGRGHFGYT. D275 acts as the Proton acceptor in catalysis.

This sequence belongs to the protein kinase superfamily. Ser/Thr protein kinase family. Post-translationally, autophosphorylated. In terms of tissue distribution, highly expressed in roots in the zone of cell division. Expressed in leaf mesophyll cells and at lower levels in mature stems.

The enzyme catalyses L-seryl-[protein] + ATP = O-phospho-L-seryl-[protein] + ADP + H(+). The catalysed reaction is L-threonyl-[protein] + ATP = O-phospho-L-threonyl-[protein] + ADP + H(+). Activated by the binding of calmodulin-like protein 1 (CML1) in the presence of Ca(2+). Its function is as follows. Possesses kinase activity in vitro. In Oryza sativa subsp. japonica (Rice), this protein is Calcium/calmodulin-dependent serine/threonine-protein kinase 1 (CAMK1).